Here is a 232-residue protein sequence, read N- to C-terminus: Ubiquinone biosynthesis O-methyltransferase (232 aa).

The S-adenosyl-L-methionine site is built by R36, G55, D76, and L120.

This sequence belongs to the methyltransferase superfamily. UbiG/COQ3 family.

The catalysed reaction is a 3-demethylubiquinol + S-adenosyl-L-methionine = a ubiquinol + S-adenosyl-L-homocysteine + H(+). It carries out the reaction a 3-(all-trans-polyprenyl)benzene-1,2-diol + S-adenosyl-L-methionine = a 2-methoxy-6-(all-trans-polyprenyl)phenol + S-adenosyl-L-homocysteine + H(+). The protein operates within cofactor biosynthesis; ubiquinone biosynthesis. Its function is as follows. O-methyltransferase that catalyzes the 2 O-methylation steps in the ubiquinone biosynthetic pathway. The chain is Ubiquinone biosynthesis O-methyltransferase from Pseudomonas syringae pv. tomato (strain ATCC BAA-871 / DC3000).